The primary structure comprises 429 residues: Glutamate-1-semialdehyde 2,1-aminomutase 1 (429 aa).

Lysine 268 carries the post-translational modification N6-(pyridoxal phosphate)lysine.

Belongs to the class-III pyridoxal-phosphate-dependent aminotransferase family. HemL subfamily. In terms of assembly, homodimer. Pyridoxal 5'-phosphate serves as cofactor.

The protein localises to the cytoplasm. The enzyme catalyses (S)-4-amino-5-oxopentanoate = 5-aminolevulinate. The protein operates within porphyrin-containing compound metabolism; protoporphyrin-IX biosynthesis; 5-aminolevulinate from L-glutamyl-tRNA(Glu): step 2/2. This is Glutamate-1-semialdehyde 2,1-aminomutase 1 from Listeria monocytogenes serotype 4b (strain F2365).